Here is a 357-residue protein sequence, read N- to C-terminus: NADH-quinone oxidoreductase subunit H (357 aa).

The next 8 membrane-spanning stretches (helical) occupy residues 25 to 45 (ILII…VVAY), 94 to 114 (IYLF…VWVV), 130 to 150 (LLYV…AGWA), 166 to 186 (LLVS…MIAG), 201 to 221 (IIYW…ISAL), 254 to 274 (FFLA…VMFF), 294 to 314 (VPGI…YLWV), and 329 to 349 (LSWK…ALMT).

This sequence belongs to the complex I subunit 1 family. In terms of assembly, NDH-1 is composed of 14 different subunits. Subunits NuoA, H, J, K, L, M, N constitute the membrane sector of the complex.

It localises to the cell inner membrane. The enzyme catalyses a quinone + NADH + 5 H(+)(in) = a quinol + NAD(+) + 4 H(+)(out). Functionally, NDH-1 shuttles electrons from NADH, via FMN and iron-sulfur (Fe-S) centers, to quinones in the respiratory chain. The immediate electron acceptor for the enzyme in this species is believed to be ubiquinone. Couples the redox reaction to proton translocation (for every two electrons transferred, four hydrogen ions are translocated across the cytoplasmic membrane), and thus conserves the redox energy in a proton gradient. This subunit may bind ubiquinone. The sequence is that of NADH-quinone oxidoreductase subunit H from Ruthia magnifica subsp. Calyptogena magnifica.